The primary structure comprises 264 residues: MQKLYIIKVGGNIIDNPEALTSFLKDFASLKENKILVHGGGKVATEISKGLGIEAQMVDGRRITDAETLKIVTMVYGGLINKNIVAKLQSNECNAIGLTGADANIMLSSKRPLKNGIDYGFVGDVKKVHPQPLIHLLSQGITPVVAPLTHDGNGTMLNTNADTVASELAVALCGAFAVNLVYCFELKGVLRDFEDKDSVISTINPDTYEELKSTGVINKGMIPKLDNSFNAINAGVSSVIICQAESLVELINENKTVGTKLVAN.

Substrate is bound by residues 40 to 41 (GG), Arg-62, and Asn-158.

This sequence belongs to the acetylglutamate kinase family. ArgB subfamily.

Its subcellular location is the cytoplasm. The enzyme catalyses N-acetyl-L-glutamate + ATP = N-acetyl-L-glutamyl 5-phosphate + ADP. It functions in the pathway amino-acid biosynthesis; L-arginine biosynthesis; N(2)-acetyl-L-ornithine from L-glutamate: step 2/4. Its function is as follows. Catalyzes the ATP-dependent phosphorylation of N-acetyl-L-glutamate. This Cytophaga hutchinsonii (strain ATCC 33406 / DSM 1761 / CIP 103989 / NBRC 15051 / NCIMB 9469 / D465) protein is Acetylglutamate kinase.